Reading from the N-terminus, the 944-residue chain is E3 ubiquitin-protein ligase JMJ24 (944 aa).

2 disordered regions span residues glutamine 20–aspartate 40 and alanine 77–glycine 103. Positions isoleucine 38–alanine 83 constitute a WRC domain. Residues lysine 73–alanine 80 carry the Nuclear localization signal 1 motif. The PHD-type; atypical zinc-finger motif lies at glycine 217–leucine 269. Zn(2+)-binding residues include cysteine 220, cysteine 223, cysteine 234, cysteine 237, cysteine 243, cysteine 246, cysteine 263, and cysteine 266. A Nuclear localization signal 2 motif is present at residues glutamate 323 to glutamate 330. In terms of domain architecture, JmjC spans proline 621–arginine 873. Residues glutamate 685–glutamate 703 are compositionally biased toward basic and acidic residues. Residues glutamate 685–arginine 715 form a disordered region.

This sequence belongs to the JARID1 histone demethylase family. In terms of assembly, homodimer. Interacts with RDR2. Binds to CMT3. Associates with the E2 ubiquitin-conjugating enzyme UBC10. Self-ubiquitinates. Expressed in inflorescences, flowers, roots, siliques, leaves and stems, especially in the vasculature (mainly phloem), with highest levels in floral organs.

Its subcellular location is the nucleus. It catalyses the reaction S-ubiquitinyl-[E2 ubiquitin-conjugating enzyme]-L-cysteine + [acceptor protein]-L-lysine = [E2 ubiquitin-conjugating enzyme]-L-cysteine + N(6)-ubiquitinyl-[acceptor protein]-L-lysine.. Binds histone H3 but seems to have lost demethylase activity probably due to its inability to bind iron Fe(2+). Possesses E3 ubiquitin ligase activity and targets directly CMT3 for proteasomal degradation to initiate destabilization of the heterochromatic state (e.g. CHG cytosine methylation and H3K9me2) of endogenous silenced loci. Required for the removal of repressive H3K9me2 histone marks to facilitate the transcription of AtSN1, AtMu1c, solo LTR and SDC, thus counteracting their transcriptional silencing. Mainly required to promote the basal level transcription of silenced loci such as TE and repeats targeted by RNA-dependent DNA methylation (RdDM) for silencing, a specialized branch of the RNA interference (RNAi) pathway. Also cooperates with RNAi pathways for gene silencing both by contributing to the production of 24-nt siRNA to initiate RdDM and by recruiting RDR2 to enable local transcripts to make dsRNA. Antagonizes histone H3K9 demethylase IBM1/JMJ25 function. This chain is E3 ubiquitin-protein ligase JMJ24, found in Arabidopsis thaliana (Mouse-ear cress).